The sequence spans 24 residues: Coenzyme PQQ synthesis protein A (24 aa).

The pyrroloquinoline quinone (Glu-Tyr) cross-link spans 16–20 (EITMY).

This sequence belongs to the PqqA family.

Its pathway is cofactor biosynthesis; pyrroloquinoline quinone biosynthesis. Its function is as follows. Required for coenzyme pyrroloquinoline quinone (PQQ) biosynthesis. PQQ is probably formed by cross-linking a specific glutamate to a specific tyrosine residue and excising these residues from the peptide. This chain is Coenzyme PQQ synthesis protein A, found in Variovorax paradoxus (strain S110).